We begin with the raw amino-acid sequence, 364 residues long: Variable large protein 21 (364 aa).

The signal sequence occupies residues 1–26 (MRKRISAIINKLNISIMMMIVVLMIG). The N-palmitoyl cysteine moiety is linked to residue cysteine 27. A lipid anchor (S-diacylglycerol cysteine) is attached at cysteine 27.

This sequence belongs to the variable large protein (Vlp) family. Alpha subfamily.

It localises to the cell outer membrane. Its function is as follows. The Vlp and Vsp proteins are antigenically distinct proteins, only one vlp or vsp gene is transcriptionally active at any one time. Switching between these genes is a mechanism of host immune response evasion. This is Variable large protein 21 from Borrelia hermsii.